The following is a 126-amino-acid chain: Aspartate 1-decarboxylase (126 aa).

Ser25 acts as the Schiff-base intermediate with substrate; via pyruvic acid in catalysis. Ser25 is subject to Pyruvic acid (Ser). Position 57 (Thr57) interacts with substrate. Catalysis depends on Tyr58, which acts as the Proton donor. Position 73 to 75 (73 to 75 (GAA)) interacts with substrate.

The protein belongs to the PanD family. As to quaternary structure, heterooctamer of four alpha and four beta subunits. Pyruvate serves as cofactor. Post-translationally, is synthesized initially as an inactive proenzyme, which is activated by self-cleavage at a specific serine bond to produce a beta-subunit with a hydroxyl group at its C-terminus and an alpha-subunit with a pyruvoyl group at its N-terminus.

The protein resides in the cytoplasm. The enzyme catalyses L-aspartate + H(+) = beta-alanine + CO2. It participates in cofactor biosynthesis; (R)-pantothenate biosynthesis; beta-alanine from L-aspartate: step 1/1. Its function is as follows. Catalyzes the pyruvoyl-dependent decarboxylation of aspartate to produce beta-alanine. In Acetivibrio thermocellus (strain ATCC 27405 / DSM 1237 / JCM 9322 / NBRC 103400 / NCIMB 10682 / NRRL B-4536 / VPI 7372) (Clostridium thermocellum), this protein is Aspartate 1-decarboxylase.